A 236-amino-acid polypeptide reads, in one-letter code: Purine nucleoside phosphorylase DeoD-type (236 aa).

Residue His4 participates in a purine D-ribonucleoside binding. Phosphate is bound by residues Gly20, Arg24, Arg43, and 87 to 90; that span reads RVGT. A purine D-ribonucleoside contacts are provided by residues 179 to 181 and 203 to 204; these read EME and SD. The Proton donor role is filled by Asp204.

The protein belongs to the PNP/UDP phosphorylase family. In terms of assembly, homohexamer; trimer of homodimers.

It carries out the reaction a purine D-ribonucleoside + phosphate = a purine nucleobase + alpha-D-ribose 1-phosphate. It catalyses the reaction a purine 2'-deoxy-D-ribonucleoside + phosphate = a purine nucleobase + 2-deoxy-alpha-D-ribose 1-phosphate. Functionally, catalyzes the reversible phosphorolytic breakdown of the N-glycosidic bond in the beta-(deoxy)ribonucleoside molecules, with the formation of the corresponding free purine bases and pentose-1-phosphate. The sequence is that of Purine nucleoside phosphorylase DeoD-type from Streptococcus pneumoniae (strain JJA).